A 279-amino-acid polypeptide reads, in one-letter code: Large ribosomal subunit protein uL2 (279 aa).

Disordered regions lie at residues 29–59 and 224–279; these read PEKS…GGHK and VAMN…KNKR. Over residues 50–59 the composition is skewed to basic residues; the sequence is TTRHKGGGHK. Residues 253–268 show a composition bias toward basic and acidic residues; it reads PEGRTRRPNKESDKLI. Residues 269–279 are compositionally biased toward basic residues; the sequence is VRRRRTGKNKR.

The protein belongs to the universal ribosomal protein uL2 family. In terms of assembly, part of the 50S ribosomal subunit. Forms a bridge to the 30S subunit in the 70S ribosome.

In terms of biological role, one of the primary rRNA binding proteins. Required for association of the 30S and 50S subunits to form the 70S ribosome, for tRNA binding and peptide bond formation. It has been suggested to have peptidyltransferase activity; this is somewhat controversial. Makes several contacts with the 16S rRNA in the 70S ribosome. This Paenarthrobacter aurescens (strain TC1) protein is Large ribosomal subunit protein uL2.